The chain runs to 123 residues: Small ribosomal subunit protein uS12cz/uS12cy (123 aa).

Belongs to the universal ribosomal protein uS12 family. In terms of assembly, part of the 30S ribosomal subunit.

It localises to the plastid. Its subcellular location is the chloroplast. In terms of biological role, with S4 and S5 plays an important role in translational accuracy. Located at the interface of the 30S and 50S subunits. The polypeptide is Small ribosomal subunit protein uS12cz/uS12cy (rps12-A) (Drimys granadensis).